The chain runs to 156 residues: Isotocin-neurophysin IT 2 (156 aa).

Positions 1–19 are cleaved as a signal peptide; it reads MTGAAVSVCLLYALSVCSA. Cysteines 20 and 25 form a disulfide. Glycine 28 is subject to Glycine amide. 7 cysteine pairs are disulfide-bonded: cysteine 41-cysteine 85, cysteine 44-cysteine 58, cysteine 52-cysteine 75, cysteine 59-cysteine 65, cysteine 92-cysteine 105, cysteine 99-cysteine 117, and cysteine 106-cysteine 111.

This sequence belongs to the vasopressin/oxytocin family. In terms of processing, seven disulfide bonds are present in neurophysin.

The protein localises to the secreted. Its function is as follows. Isotocin causes contraction of smooth muscles. The sequence is that of Isotocin-neurophysin IT 2 from Oncorhynchus keta (Chum salmon).